A 176-amino-acid polypeptide reads, in one-letter code: ATP-dependent protease subunit HslV (176 aa).

Threonine 2 is an active-site residue. 3 residues coordinate Na(+): glycine 157, cysteine 160, and threonine 163.

It belongs to the peptidase T1B family. HslV subfamily. In terms of assembly, a double ring-shaped homohexamer of HslV is capped on each side by a ring-shaped HslU homohexamer. The assembly of the HslU/HslV complex is dependent on binding of ATP.

The protein resides in the cytoplasm. The enzyme catalyses ATP-dependent cleavage of peptide bonds with broad specificity.. With respect to regulation, allosterically activated by HslU binding. Protease subunit of a proteasome-like degradation complex believed to be a general protein degrading machinery. The polypeptide is ATP-dependent protease subunit HslV (Klebsiella pneumoniae (strain 342)).